Consider the following 489-residue polypeptide: Ecdysteroid UDP-glucosyltransferase (489 aa).

The first 17 residues, Met1–Ala17, serve as a signal peptide directing secretion.

The protein belongs to the UDP-glycosyltransferase family.

Functionally, catalyzes the transfer of glucose from UDP-glucose to ecdysteroids which are insect molting hormones. Expression of egt interferes with normal insect development and block molting. This Orgyia pseudotsugata (Douglas-fir tussock moth) protein is Ecdysteroid UDP-glucosyltransferase (EGT).